Consider the following 419-residue polypeptide: L-rhamnose isomerase (419 aa).

Mn(2+) is bound by residues His-262, Asp-294, and Asp-296.

This sequence belongs to the rhamnose isomerase family. As to quaternary structure, homotetramer. The cofactor is Mn(2+).

It localises to the cytoplasm. It catalyses the reaction L-rhamnopyranose = L-rhamnulose. The protein operates within carbohydrate degradation; L-rhamnose degradation; glycerone phosphate from L-rhamnose: step 1/3. In terms of biological role, catalyzes the interconversion of L-rhamnose and L-rhamnulose. The sequence is that of L-rhamnose isomerase from Escherichia coli O127:H6 (strain E2348/69 / EPEC).